A 448-amino-acid chain; its full sequence is Gamma conglutin 2 (448 aa).

The N-terminal stretch at methionine 1–leucine 33 is a signal peptide. The Peptidase A1 domain maps to histidine 63–asparagine 428. 5 disulfides stabilise this stretch: cysteine 91-cysteine 181, cysteine 105-cysteine 118, cysteine 110-cysteine 136, cysteine 121-cysteine 131, and cysteine 349-cysteine 390. Asparagine 133 carries an N-linked (GlcNAc...) asparagine glycan.

The protein belongs to the peptidase A1 family. As to quaternary structure, two-subunit monomeric unit made of alpha and beta subunits coupled by disulfide bonds (at pH 4.5 and under non-reducing conditions). Can also form oligomers including dimer, tetramer and cyclic hexamer (trimer of dimers) (at pH &gt; 5.5). Component of globulins complexes which accumulate in seeds. Interacts with flavonoids (e.g. apigenin glucosides) present in globulins complexes. In terms of processing, glycosylated on alpha chain. In terms of tissue distribution, expressed in developing seeds and in the young roots and cotyledons of germinating seeds and young seedlings.

Its subcellular location is the secreted. The protein localises to the extracellular space. Sulfur-rich seed storage protein that remains undegraded at germination. This is Gamma conglutin 2 from Lupinus albus (White lupine).